The chain runs to 194 residues: Lytic chitin monooxygenase (194 aa).

A signal peptide spans 1–28 (MKKSLLTIVLAFSFVLGGAALAPTVSEA). Positions 29 and 114 each coordinate Cu cation. Residues 29–191 (HGYVASPGSR…VNAFYQAIDV (163 aa)) enclose the Chitin-binding type-4 domain.

Cu(2+) serves as cofactor.

The protein localises to the secreted. The enzyme catalyses [(1-&gt;4)-N-acetyl-beta-D-glucosaminyl]n+m + reduced acceptor + O2 = [(1-&gt;4)-N-acetyl-beta-D-glucosaminyl]m-1-(1-&gt;4)-2-(acetylamino)-2-deoxy-D-glucono-1,5-lactone + [(1-&gt;4)-N-acetyl-beta-D-glucosaminyl]n + acceptor + H2O.. It participates in glycan degradation; chitin degradation. Its function is as follows. Involved in chitin degradation. Catalyzes the oxidative cleavage of glycosidic bonds in both alpha- and beta-chitin via a copper-dependent mechanism, leading to oxidized chitooligosaccharides with a dominance of even-numbered products. Acts synergistically with the chitinase EfChi18A, and combining the two enzymes leads to rapid and complete depolymerization of crystalline chitin, especially with beta-chitin as a substrate. Is likely involved in a chitin degradation pathway that allows E.faecalis V583 to grow on chitin as a carbon source. The polypeptide is Lytic chitin monooxygenase (Enterococcus faecalis (strain ATCC 700802 / V583)).